A 358-amino-acid polypeptide reads, in one-letter code: Protein RecA (358 aa).

Residue 69–76 participates in ATP binding; the sequence is GPESSGKT.

This sequence belongs to the RecA family.

The protein localises to the cytoplasm. Its function is as follows. Can catalyze the hydrolysis of ATP in the presence of single-stranded DNA, the ATP-dependent uptake of single-stranded DNA by duplex DNA, and the ATP-dependent hybridization of homologous single-stranded DNAs. It interacts with LexA causing its activation and leading to its autocatalytic cleavage. The sequence is that of Protein RecA from Trichormus variabilis (strain ATCC 29413 / PCC 7937) (Anabaena variabilis).